A 321-amino-acid polypeptide reads, in one-letter code: Ribosomal RNA small subunit methyltransferase H (321 aa).

S-adenosyl-L-methionine-binding positions include 42 to 44, aspartate 62, phenylalanine 86, aspartate 107, and glutamine 114; that span reads GGH.

It belongs to the methyltransferase superfamily. RsmH family.

The protein resides in the cytoplasm. It carries out the reaction cytidine(1402) in 16S rRNA + S-adenosyl-L-methionine = N(4)-methylcytidine(1402) in 16S rRNA + S-adenosyl-L-homocysteine + H(+). Its function is as follows. Specifically methylates the N4 position of cytidine in position 1402 (C1402) of 16S rRNA. The protein is Ribosomal RNA small subunit methyltransferase H of Herminiimonas arsenicoxydans.